The primary structure comprises 426 residues: 26S proteasome regulatory subunit 7 homolog A (426 aa).

Residue 209–216 (GPPGTGKT) participates in ATP binding. Glycyl lysine isopeptide (Lys-Gly) (interchain with G-Cter in ubiquitin) cross-links involve residues Lys400 and Lys415.

It belongs to the AAA ATPase family. Component of the 19S regulatory particle (RP/PA700) base subcomplex of the 26S proteasome. The 26S proteasome is composed of a core protease (CP), known as the 20S proteasome, capped at one or both ends by the 19S regulatory particle (RP/PA700). The RP/PA700 complex is composed of at least 17 different subunits in two subcomplexes, the base and the lid, which form the portions proximal and distal to the 20S proteolytic core, respectively.

The protein resides in the cytoplasm. It localises to the nucleus. The 26S proteasome is involved in the ATP-dependent degradation of ubiquitinated proteins. The regulatory (or ATPase) complex confers ATP dependency and substrate specificity to the 26S complex. This is 26S proteasome regulatory subunit 7 homolog A (RPT1A) from Arabidopsis thaliana (Mouse-ear cress).